A 102-amino-acid chain; its full sequence is Large ribosomal subunit protein bL21 (102 aa).

It belongs to the bacterial ribosomal protein bL21 family. As to quaternary structure, part of the 50S ribosomal subunit. Contacts protein L20.

Functionally, this protein binds to 23S rRNA in the presence of protein L20. The chain is Large ribosomal subunit protein bL21 from Bifidobacterium longum subsp. infantis (strain ATCC 15697 / DSM 20088 / JCM 1222 / NCTC 11817 / S12).